The sequence spans 185 residues: Ribosome-recycling factor (185 aa).

The protein belongs to the RRF family.

It is found in the cytoplasm. Functionally, responsible for the release of ribosomes from messenger RNA at the termination of protein biosynthesis. May increase the efficiency of translation by recycling ribosomes from one round of translation to another. This is Ribosome-recycling factor from Shewanella piezotolerans (strain WP3 / JCM 13877).